The following is a 147-amino-acid chain: Nucleoside diphosphate kinase (147 aa).

6 residues coordinate ATP: lysine 9, phenylalanine 57, arginine 85, threonine 91, arginine 102, and asparagine 112. Catalysis depends on histidine 115, which acts as the Pros-phosphohistidine intermediate.

It belongs to the NDK family. In terms of assembly, homotetramer. Mg(2+) is required as a cofactor.

Its subcellular location is the cytoplasm. The catalysed reaction is a 2'-deoxyribonucleoside 5'-diphosphate + ATP = a 2'-deoxyribonucleoside 5'-triphosphate + ADP. It catalyses the reaction a ribonucleoside 5'-diphosphate + ATP = a ribonucleoside 5'-triphosphate + ADP. Functionally, major role in the synthesis of nucleoside triphosphates other than ATP. The ATP gamma phosphate is transferred to the NDP beta phosphate via a ping-pong mechanism, using a phosphorylated active-site intermediate. This chain is Nucleoside diphosphate kinase, found in Listeria monocytogenes serotype 4a (strain HCC23).